A 1456-amino-acid polypeptide reads, in one-letter code: Sterol 3-beta-glucosyltransferase (1456 aa).

The span at 1-12 (MASQDRGSDRTS) shows a compositional bias: basic and acidic residues. The disordered stretch occupies residues 1–229 (MASQDRGSDR…RSPAAAATGE (229 aa)). The span at 13–22 (RRLTKKRKDG) shows a compositional bias: basic residues. The segment covering 23-48 (KKPMRDVSLDMPERFKDGDDAHEDVT) has biased composition (basic and acidic residues). Composition is skewed to polar residues over residues 54 to 63 (HTMSMNQSIF) and 109 to 123 (RLST…SGQT). Residues 236 to 283 (KRIQHIFEFAQEEEVISEYPCWLLQSILLQGYMYITQKHICFYAYIPK) form the GRAM 1 domain. The 98-residue stretch at 287-384 (DVSKTGYLSK…WVKSIQKVIF (98 aa)) folds into the PH domain. 2 disordered regions span residues 500–612 (LSPL…TASA) and 631–691 (NAFS…TRLS). Positions 510 to 523 (RSSMSDISVRSSVD) are enriched in low complexity. 3 stretches are compositionally biased toward basic and acidic residues: residues 524–536 (ANRK…RSMD), 544–557 (WSLE…EAHR), and 571–584 (RVGD…RATD). Polar residues-rich tracts occupy residues 585 to 612 (SDSA…TASA) and 631 to 650 (NAFS…TRSS). Residues 774–840 (DNFREHFAFR…KDIENVNKEK (67 aa)) form the GRAM 2 domain. 11 residues coordinate UDP-alpha-D-glucose: serine 966, arginine 967, aspartate 969, alanine 1269, histidine 1271, histidine 1284, serine 1287, glycine 1288, threonine 1289, aspartate 1308, and glutamine 1309.

This sequence belongs to the glycosyltransferase 28 family.

Its subcellular location is the cytoplasm. It localises to the preautophagosomal structure membrane. It carries out the reaction a sterol + UDP-alpha-D-glucose = a sterol 3-beta-D-glucoside + UDP + H(+). The catalysed reaction is ergosterol + UDP-alpha-D-glucose = ergosteryl 3-beta-D-glucoside + UDP + H(+). Sterol glycosyltransferase responsible for the glycosylation of ergosterol to form ergosterol-glucoside. The chain is Sterol 3-beta-glucosyltransferase from Leptosphaeria maculans (Blackleg fungus).